The following is a 173-amino-acid chain: Shikimate kinase (173 aa).

14–19 (GAGKST) is an ATP binding site. Position 18 (Ser-18) interacts with Mg(2+). Asp-36, Arg-60, and Gly-82 together coordinate substrate. An ATP-binding site is contributed by Arg-120. Arg-140 contacts substrate. ATP is bound at residue Gln-157.

This sequence belongs to the shikimate kinase family. As to quaternary structure, monomer. Requires Mg(2+) as cofactor.

It localises to the cytoplasm. It catalyses the reaction shikimate + ATP = 3-phosphoshikimate + ADP + H(+). The protein operates within metabolic intermediate biosynthesis; chorismate biosynthesis; chorismate from D-erythrose 4-phosphate and phosphoenolpyruvate: step 5/7. In terms of biological role, catalyzes the specific phosphorylation of the 3-hydroxyl group of shikimic acid using ATP as a cosubstrate. The chain is Shikimate kinase from Buchnera aphidicola subsp. Acyrthosiphon pisum (strain APS) (Acyrthosiphon pisum symbiotic bacterium).